The chain runs to 293 residues: Signal recognition particle receptor FtsY (293 aa).

GTP contacts are provided by residues 93 to 100, 175 to 179, and 239 to 242; these read GVNGAGKT, DTAGR, and TKLD.

It belongs to the GTP-binding SRP family. FtsY subfamily. Part of the signal recognition particle protein translocation system, which is composed of SRP and FtsY. SRP is a ribonucleoprotein composed of Ffh and a 4.5S RNA molecule.

It is found in the cell inner membrane. It localises to the cytoplasm. The enzyme catalyses GTP + H2O = GDP + phosphate + H(+). Functionally, involved in targeting and insertion of nascent membrane proteins into the cytoplasmic membrane. Acts as a receptor for the complex formed by the signal recognition particle (SRP) and the ribosome-nascent chain (RNC). Interaction with SRP-RNC leads to the transfer of the RNC complex to the Sec translocase for insertion into the membrane, the hydrolysis of GTP by both Ffh and FtsY, and the dissociation of the SRP-FtsY complex into the individual components. This Helicobacter pylori (strain ATCC 700392 / 26695) (Campylobacter pylori) protein is Signal recognition particle receptor FtsY.